We begin with the raw amino-acid sequence, 369 residues long: Peridinin-chlorophyll a-binding protein 2, chloroplastic (369 aa).

The N-terminal 56 residues, 1-56 (MVRSGKKAVVLATVAFCATSVVQKTCGFVPSPLRQRAAAAGAAASVATMFAPAAFA), are a transit peptide targeting the chloroplast. A run of 2 repeats spans residues 57-219 (DEIG…VPSG) and 220-369 (DTIG…AAQR).

Homotrimer.

It is found in the plastid. It localises to the chloroplast. Water-soluble antenna for capture of solar energy in the blue-green range. Peridinin is an asymmetric carotenoid. The sequence is that of Peridinin-chlorophyll a-binding protein 2, chloroplastic from Amphidinium carterae (Dinoflagellate).